The primary structure comprises 627 residues: UvrABC system protein C (627 aa).

The GIY-YIG domain occupies 26-105 (PSPGVYQFRN…IKELKPRYNV (80 aa)). Residues 219-254 (STMIRSLTSAMQLFARELKFERAAEIKMQLESLKRY) enclose the UVR domain.

This sequence belongs to the UvrC family. Interacts with UvrB in an incision complex.

It localises to the cytoplasm. In terms of biological role, the UvrABC repair system catalyzes the recognition and processing of DNA lesions. UvrC both incises the 5' and 3' sides of the lesion. The N-terminal half is responsible for the 3' incision and the C-terminal half is responsible for the 5' incision. In Pelodictyon phaeoclathratiforme (strain DSM 5477 / BU-1), this protein is UvrABC system protein C.